Here is a 138-residue protein sequence, read N- to C-terminus: Ribulose bisphosphate carboxylase small subunit (138 aa).

This sequence belongs to the RuBisCO small chain family. Heterohexadecamer of 8 large and 8 small subunits.

It is found in the plastid. It localises to the chloroplast. RuBisCO catalyzes two reactions: the carboxylation of D-ribulose 1,5-bisphosphate, the primary event in carbon dioxide fixation, as well as the oxidative fragmentation of the pentose substrate in the photorespiration process. Both reactions occur simultaneously and in competition at the same active site. Although the small subunit is not catalytic it is essential for maximal activity. Carbon dioxide and oxygen bind in the same pocket of the enzyme in a similar manner. The polypeptide is Ribulose bisphosphate carboxylase small subunit (Galdieria sulphuraria (Red alga)).